The following is a 346-amino-acid chain: Short-chain dehydrogenase/reductase bet4 (346 aa).

Positions 1–35 (MTPAKAPSHAKKPEAGSQPISSMWTQMFPPKPTYT) are disordered. 4 residues coordinate NADP(+): Val-56, Lys-80, Asp-105, and Asn-132. Ser-191 (proton donor) is an active-site residue. Positions 222 and 226 each coordinate NADP(+). The Proton acceptor role is filled by Tyr-222. Lys-226 serves as the catalytic Lowers pKa of active site Tyr.

This sequence belongs to the short-chain dehydrogenases/reductases (SDR) family.

It carries out the reaction dehydroprobetaenone I + AH2 = probetaenone I + A. It participates in mycotoxin biosynthesis. Functionally, short-chain dehydrogenase/reductase; part of the gene cluster that mediates the biosynthesis of betaenones, phytotoxic polyketides involved in leaf spot disease in sugar beets. The first step of the pathway is the synthesis of dehydroprobetaenone I by the polyketide synthase bet1 and the enoyl reductase bet3 via condensation of one acetyl-CoA starter unit with 7 malonyl-CoA units and 5 methylations. The C-terminal reductase (R) domain of bet1 catalyzes the reductive release of the polyketide chain. Because bet1 lacks a designated enoylreductase (ER) domain, the required activity is provided the enoyl reductase bet3. The short-chain dehydrogenase/reductase bet4 then catalyzes reduction of dehydroprobetaenone I to probetaenone I. The cytochrome P450 monooxygenase bet2 catalyzes successive epoxidation, oxidation (resulting from epoxide opening) and hydroxylation to install a tertiary alcohol in the decaline ring to yield betaenone C from dehydroprobetaenone I and betaenone B from probetaenone I. The FAD-linked oxidoreductase (orf1) is probably responsible for the conversion of betaenone C to betaenone A via an intramolecular aldol reaction between C-1 and C-17 to form the bridged tricyclic system in betaenone A. The sequence is that of Short-chain dehydrogenase/reductase bet4 from Neocamarosporium betae (Beet black rot fungus).